A 183-amino-acid chain; its full sequence is Probable GTP-binding protein EngB (183 aa).

An EngB-type G domain is found at 17–183 (DYPEVVFVGR…KKELLSRILN (167 aa)). Residues 25–32 (GRSNVGKS), 51–55 (GRTRA), 69–72 (DVPG), 137–140 (TKID), and 166–168 (SSA) contribute to the GTP site. The Mg(2+) site is built by S32 and T53.

Belongs to the TRAFAC class TrmE-Era-EngA-EngB-Septin-like GTPase superfamily. EngB GTPase family. Requires Mg(2+) as cofactor.

In terms of biological role, necessary for normal cell division and for the maintenance of normal septation. The chain is Probable GTP-binding protein EngB from Aquifex aeolicus (strain VF5).